The chain runs to 367 residues: MASLTFEHVKKSYHSQLTVKDFDLDVKDKELLVLVGPSGCGKSTTLRMVAGLESISEGNLLIDGERVNDLPPKERDIAMVFQNYALYPHMTVFDNMAFGLKLRKMAKQEIAERVHAAARILEIEHLLKRKPKALSGGQRQRVALGRSIVREPKVFLMDEPLSNLDAKLRVTMRTEISKLHQRLEATIIYVTHDQTEAMTMGDRIVVMNEGEIQQVAKPHDIYHYPANLFVAGFIGSPGMNFLKGIIEQQHGELFFTNSSIRLHIPEEKAKRLKEKGYAGEQMIAGVRPEHITQMTGNDQLFDSVFQANVEVNENLGSELIVHVMAGDERLKVRLDGNTRIDAGDSIQLSVKMDHVVFFDAETEEAVY.

An ABC transporter domain is found at 4-234 (LTFEHVKKSY…PANLFVAGFI (231 aa)). An ATP-binding site is contributed by 36–43 (GPSGCGKS).

Belongs to the ABC transporter superfamily.

This is an uncharacterized protein from Bacillus subtilis (strain 168).